A 419-amino-acid polypeptide reads, in one-letter code: Histidine--tRNA ligase (419 aa).

The protein belongs to the class-II aminoacyl-tRNA synthetase family. In terms of assembly, homodimer.

It is found in the cytoplasm. It catalyses the reaction tRNA(His) + L-histidine + ATP = L-histidyl-tRNA(His) + AMP + diphosphate + H(+). The sequence is that of Histidine--tRNA ligase from Desulforamulus reducens (strain ATCC BAA-1160 / DSM 100696 / MI-1) (Desulfotomaculum reducens).